A 176-amino-acid polypeptide reads, in one-letter code: Peptide methionine sulfoxide reductase B3 (176 aa).

A signal peptide spans 1-26 (MNIVNSKILFLSFTLLLLLQSSIVES). The 122-residue stretch at 51–172 (DEEWRAILSP…NSVSLKFTPA (122 aa)) folds into the MsrB domain. Zn(2+)-binding residues include C90, C93, C136, and C139. Cysteines 108 and 161 form a disulfide. The Nucleophile role is filled by C161.

Belongs to the MsrB Met sulfoxide reductase family. The cofactor is Zn(2+).

The protein localises to the endoplasmic reticulum. The catalysed reaction is L-methionyl-[protein] + [thioredoxin]-disulfide + H2O = L-methionyl-(R)-S-oxide-[protein] + [thioredoxin]-dithiol. Functionally, catalyzes the reduction of methionine sulfoxide (MetSO) to methionine in proteins. Plays a protective role against oxidative stress by restoring activity to proteins that have been inactivated by methionine oxidation. Involved in cold tolerance. Eliminates MetSO and reactive oxygen species that accumulate at the ER during cold acclimation. MSRB family specifically reduces the MetSO R-enantiomer. The polypeptide is Peptide methionine sulfoxide reductase B3 (MSRB3) (Arabidopsis thaliana (Mouse-ear cress)).